Consider the following 546-residue polypeptide: 2-isopropylmalate synthase (546 aa).

The Pyruvate carboxyltransferase domain maps to 8–271; sequence ILIFDTTLRD…NSFFKRNPDS (264 aa). Positions 17, 208, 210, and 244 each coordinate Mn(2+). The segment at 408–546 is regulatory domain; the sequence is QLSLVQVSCG…TNTFLSNNAN (139 aa).

Belongs to the alpha-IPM synthase/homocitrate synthase family. LeuA type 1 subfamily. As to quaternary structure, homodimer. The cofactor is Mn(2+).

It is found in the cytoplasm. The catalysed reaction is 3-methyl-2-oxobutanoate + acetyl-CoA + H2O = (2S)-2-isopropylmalate + CoA + H(+). It functions in the pathway amino-acid biosynthesis; L-leucine biosynthesis; L-leucine from 3-methyl-2-oxobutanoate: step 1/4. Its function is as follows. Catalyzes the condensation of the acetyl group of acetyl-CoA with 3-methyl-2-oxobutanoate (2-ketoisovalerate) to form 3-carboxy-3-hydroxy-4-methylpentanoate (2-isopropylmalate). The chain is 2-isopropylmalate synthase from Prochlorococcus marinus (strain AS9601).